The chain runs to 209 residues: 3-demethoxyubiquinol 3-hydroxylase (209 aa).

Glu58, Glu88, His91, Glu140, Glu172, and His175 together coordinate Fe cation.

Belongs to the COQ7 family. It depends on Fe cation as a cofactor.

Its subcellular location is the cell membrane. The enzyme catalyses a 5-methoxy-2-methyl-3-(all-trans-polyprenyl)benzene-1,4-diol + AH2 + O2 = a 3-demethylubiquinol + A + H2O. The protein operates within cofactor biosynthesis; ubiquinone biosynthesis. Functionally, catalyzes the hydroxylation of 2-nonaprenyl-3-methyl-6-methoxy-1,4-benzoquinol during ubiquinone biosynthesis. This chain is 3-demethoxyubiquinol 3-hydroxylase, found in Polynucleobacter necessarius subsp. necessarius (strain STIR1).